The chain runs to 268 residues: Phosphatidylglycerol--prolipoprotein diacylglyceryl transferase (268 aa).

A run of 7 helical transmembrane segments spans residues 27–47 (PALRWYGFTYLVGFVAAMWLL), 66–86 (LLFYGFLGVILGGRIGYVLFY), 104–124 (GGMSFHGGLMGVITAMIYIAW), 130–150 (FFAVADMVAPVVPIGLGAGRI), 181–201 (PSQLYQFALEGVALFLLLYWF), 208–228 (VGAVSGMFLLGYGIFRVIVET), and 242–262 (FMTMGQILSVPMVLFGLYLIL). R149 contacts a 1,2-diacyl-sn-glycero-3-phospho-(1'-sn-glycerol).

This sequence belongs to the Lgt family.

It localises to the cell inner membrane. The catalysed reaction is L-cysteinyl-[prolipoprotein] + a 1,2-diacyl-sn-glycero-3-phospho-(1'-sn-glycerol) = an S-1,2-diacyl-sn-glyceryl-L-cysteinyl-[prolipoprotein] + sn-glycerol 1-phosphate + H(+). Its pathway is protein modification; lipoprotein biosynthesis (diacylglyceryl transfer). In terms of biological role, catalyzes the transfer of the diacylglyceryl group from phosphatidylglycerol to the sulfhydryl group of the N-terminal cysteine of a prolipoprotein, the first step in the formation of mature lipoproteins. In Shewanella sp. (strain MR-4), this protein is Phosphatidylglycerol--prolipoprotein diacylglyceryl transferase.